Here is a 173-residue protein sequence, read N- to C-terminus: Zinc resistance-associated protein homolog (173 aa).

The first 28 residues, 1–28 (MNSKRIALGIIALATVVSLGTAANNAFA), serve as a signal peptide directing secretion.

It belongs to the ZraP family.

The polypeptide is Zinc resistance-associated protein homolog (Nitratidesulfovibrio vulgaris (strain ATCC 29579 / DSM 644 / CCUG 34227 / NCIMB 8303 / VKM B-1760 / Hildenborough) (Desulfovibrio vulgaris)).